The chain runs to 614 residues: Vitamin B12 transporter BtuB (614 aa).

The signal sequence occupies residues 1 to 20 (MIKKASLLTACSVTAFSAWA). Positions 26–33 (DTLVVTAN) match the TonB box motif. The 115-residue stretch at 38–152 (PRSTVLAPTT…IGGVVNIITT (115 aa)) folds into the TBDR plug domain. Cyanocob(III)alamin is bound by residues L83, S85, N92, and 110–111 (VS). A TBDR beta-barrel domain is found at 155–614 (EPGTEISAGW…EYTLSGSYTF (460 aa)). The next 3 membrane-spanning stretches (beta stranded) occupy residues 158–165 (TEISAGWG), 169–178 (YQNYDVSTQQ), and 184–195 (TRVTLLGDYAHT). The Ca(2+) site is built by D199, Q211, D213, and D215. A run of 2 beta stranded transmembrane segments spans residues 217–227 (FLSKTLYGALE) and 232–248 (DAWS…NRTN). 2 residues coordinate Ca(2+): Y249 and D250. A251 lines the cyanocob(III)alamin pocket. Position 261 (D261) interacts with Ca(2+). 14 consecutive transmembrane segments (beta stranded) span residues 263–277 (RKLY…LRYN), 279–296 (ELIK…KDYN), 309–325 (TLDE…NNVI), 328–337 (HGSIGAGVDW), 353–369 (YDQR…QQVG), 371–381 (FTFEGAARSDD), 385–400 (FGRH…WEFI), 403–417 (YRFI…KAPN), 434–443 (KSKQWEGAFE), 449–458 (VNWRISGYRN), 473–490 (YYNE…TANF), 494–509 (PLTH…ARNA), 517–529 (RRAK…QLDW), and 535–550 (DWGI…YDKD). T309 contributes to the cyanocob(III)alamin binding site. R517 lines the cyanocob(III)alamin pocket. Y551 lines the cyanocob(III)alamin pocket. 3 beta stranded membrane-spanning segments follow: residues 558-572 (TVKM…LAVA), 585-596 (IANLFDKDYETV), and 602-614 (AGRE…SYTF). Positions 597–614 (YGYQTAGREYTLSGSYTF) match the TonB C-terminal box motif.

The protein belongs to the TonB-dependent receptor family. BtuB (TC 1.B.14.3.1) subfamily.

The protein resides in the cell outer membrane. Its function is as follows. Involved in the active translocation of vitamin B12 (cyanocobalamin) across the outer membrane to the periplasmic space. It derives its energy for transport by interacting with the trans-periplasmic membrane protein TonB. This is Vitamin B12 transporter BtuB from Escherichia coli O9:H4 (strain HS).